A 321-amino-acid chain; its full sequence is Lipoyl synthase (321 aa).

7 residues coordinate [4Fe-4S] cluster: C68, C73, C79, C94, C98, C101, and S308. The Radical SAM core domain maps to 80-297 (FNHGTATFMI…KAEALAMGFT (218 aa)).

The protein belongs to the radical SAM superfamily. Lipoyl synthase family. [4Fe-4S] cluster serves as cofactor.

The protein localises to the cytoplasm. The catalysed reaction is [[Fe-S] cluster scaffold protein carrying a second [4Fe-4S](2+) cluster] + N(6)-octanoyl-L-lysyl-[protein] + 2 oxidized [2Fe-2S]-[ferredoxin] + 2 S-adenosyl-L-methionine + 4 H(+) = [[Fe-S] cluster scaffold protein] + N(6)-[(R)-dihydrolipoyl]-L-lysyl-[protein] + 4 Fe(3+) + 2 hydrogen sulfide + 2 5'-deoxyadenosine + 2 L-methionine + 2 reduced [2Fe-2S]-[ferredoxin]. It participates in protein modification; protein lipoylation via endogenous pathway; protein N(6)-(lipoyl)lysine from octanoyl-[acyl-carrier-protein]: step 2/2. Functionally, catalyzes the radical-mediated insertion of two sulfur atoms into the C-6 and C-8 positions of the octanoyl moiety bound to the lipoyl domains of lipoate-dependent enzymes, thereby converting the octanoylated domains into lipoylated derivatives. The sequence is that of Lipoyl synthase from Escherichia coli O9:H4 (strain HS).